The following is a 283-amino-acid chain: Phosphate import ATP-binding protein PstB (283 aa).

A compositionally biased stretch (polar residues) spans 1–20 (MAQTLAQTKQISQSHTFDVS). The disordered stretch occupies residues 1 to 32 (MAQTLAQTKQISQSHTFDVSQSHHKTPDDTNS). Residues 37-278 (YSTQNLDLWY…PSNKKTEDYI (242 aa)) form the ABC transporter domain. 69–76 (GPSGCGKS) contacts ATP.

Belongs to the ABC transporter superfamily. Phosphate importer (TC 3.A.1.7) family. In terms of assembly, the complex is composed of two ATP-binding proteins (PstB), two transmembrane proteins (PstC and PstA) and a solute-binding protein (PstS).

It is found in the cell membrane. It carries out the reaction phosphate(out) + ATP + H2O = ADP + 2 phosphate(in) + H(+). Its function is as follows. Part of the ABC transporter complex PstSACB involved in phosphate import. Responsible for energy coupling to the transport system. The protein is Phosphate import ATP-binding protein PstB of Staphylococcus aureus (strain MRSA252).